We begin with the raw amino-acid sequence, 592 residues long: 3-hydroxy-3-methylglutaryl-coenzyme A reductase 1 (592 aa).

Residues 1–45 (MDLRRRPPKPPVTNNNNSNGSFRSYQPRTSDDDHRRRATTIAPPP) form a disordered region. Polar residues predominate over residues 12-28 (VTNNNNSNGSFRSYQPR). N-linked (GlcNAc...) asparagine glycosylation is found at N16 and N19. 2 helical membrane passes run 47-69 (ASDA…FFSV) and 97-117 (AIIA…IDFV). Residues 118 to 171 (QSFISRASGDAWDLADTIDDDDHRLVTCSPPTPIVSVAKLPNPEPIVTESLPEE) are linker. A catalytic region spans residues 172–592 (DEEIVKSVID…GATTTTTTTT (421 aa)). E265 functions as the Charge relay system in the catalytic mechanism. N329 carries N-linked (GlcNAc...) asparagine glycosylation. Active-site charge relay system residues include K397 and D473. The active-site Proton donor is the H571. N575 carries N-linked (GlcNAc...) asparagine glycosylation. Residue S577 is modified to Phosphoserine.

It belongs to the HMG-CoA reductase family. Interacts (via N-terminus) with B''ALPHA and B''BETA. Inactivated by phosphorylation at Ser-577 by KIN10 activated form. Probably also phosphorylated at additional sites. Found in all tissues. Isoform Short is expressed at low levels specifically in flowers. Expressed in both the tapetum and microspores.

It localises to the endoplasmic reticulum membrane. It carries out the reaction (R)-mevalonate + 2 NADP(+) + CoA = (3S)-3-hydroxy-3-methylglutaryl-CoA + 2 NADPH + 2 H(+). The protein operates within metabolic intermediate biosynthesis; (R)-mevalonate biosynthesis; (R)-mevalonate from acetyl-CoA: step 3/3. Regulated at the post-translational level in response to alterations of sphingolipid and sterol biosynthetic pathways. Negatively regulated by a PP2A-dependent dephosphorylation occurring at a site different than Ser-577. Completely inhibited by mevinolin (IC(50) = 12.5 nM). Reversibly inactivated by phosphorylation at Ser-577 by spinach or Brassica oleracea HMGR kinases in a cell-free system. Down-regulated by KIN10 through its phosphorylation at Ser-577. Functionally, catalyzes the synthesis of mevalonate, the specific precursor of all isoprenoid compounds present in plants. This is 3-hydroxy-3-methylglutaryl-coenzyme A reductase 1 from Arabidopsis thaliana (Mouse-ear cress).